Reading from the N-terminus, the 395-residue chain is Putative phosphatidate cytidylyltransferase (395 aa).

A run of 9 helical transmembrane segments spans residues 13–33 (STVF…SAFA), 78–98 (FAFG…MNWE), 115–135 (SLLS…VIYF), 144–164 (WIWT…YMIS), 177–197 (IYSL…YFSV), 201–221 (WTTI…AYLF), 242–262 (AFFG…LYSI), 306–326 (FYIY…IFAI), and 358–378 (FDSS…AGIS).

Belongs to the CDS family.

The protein localises to the cell membrane. It carries out the reaction a 1,2-diacyl-sn-glycero-3-phosphate + CTP + H(+) = a CDP-1,2-diacyl-sn-glycerol + diphosphate. The protein operates within phospholipid metabolism; CDP-diacylglycerol biosynthesis; CDP-diacylglycerol from sn-glycerol 3-phosphate: step 3/3. The polypeptide is Putative phosphatidate cytidylyltransferase (cdsA) (Mycoplasma pneumoniae (strain ATCC 29342 / M129 / Subtype 1) (Mycoplasmoides pneumoniae)).